The primary structure comprises 155 residues: Ribosomal RNA large subunit methyltransferase H (155 aa).

Residues isoleucine 71, glycine 103, and 122-127 each bind S-adenosyl-L-methionine; that span reads FGRMVW.

Belongs to the RNA methyltransferase RlmH family. Homodimer.

It is found in the cytoplasm. It catalyses the reaction pseudouridine(1915) in 23S rRNA + S-adenosyl-L-methionine = N(3)-methylpseudouridine(1915) in 23S rRNA + S-adenosyl-L-homocysteine + H(+). Specifically methylates the pseudouridine at position 1915 (m3Psi1915) in 23S rRNA. The sequence is that of Ribosomal RNA large subunit methyltransferase H from Cereibacter sphaeroides (strain ATCC 17025 / ATH 2.4.3) (Rhodobacter sphaeroides).